The chain runs to 286 residues: Interferon-induced 35 kDa protein homolog (286 aa).

The leucine-zipper stretch occupies residues 5–26 (LQTVLYSLQEEQARLKMRLQEL). NID domains are found at residues 81–170 (ALVT…GDVE) and 183–266 (FADE…GEVE).

This sequence belongs to the NMI family. As to quaternary structure, homodimer. Also interacts with B-ATF. Interacts with TRIM21. Interacts (via NID domains) with NMI (via NID domains); the interaction is direct and is facilitated by TRIM21. Post-translationally, phosphorylated. Dephosphorylation correlates with the formation of a complex with NMI.

Its subcellular location is the cytoplasm. The protein localises to the nucleus. It localises to the secreted. In terms of biological role, acts as a signaling pathway regulator involved in innate immune system response. In response to interferon IFN-alpha, associates in a complex with transcriptional regulator NMI to regulate immune response; the complex formation prevents proteasome-mediated degradation of IFI35 and correlates with IFI35 dephosphorylation. In complex with NMI, inhibits virus-triggered type I interferon/IFN-beta production. In complex with NMI, negatively regulates nuclear factor NF-kappa-B signaling by inhibiting the nuclear translocation, activation and transcription of the NF-kappa-B subunit p65/RELA, resulting in the inhibition of endothelial cell proliferation, migration and re-endothelialization of injured arteries. Beside its role as an intracellular signaling pathway regulator, also functions extracellularly as damage-associated molecular patterns (DAMPs) to promote inflammation when actively released by macrophage to the extracellular space during cell injury and pathogen invasion. Macrophage-secreted IFI35 activates NF-kappa-B signaling in adjacent macrophages through Toll-like receptor 4/TLR4 activation, thereby inducing NF-kappa-B translocation from the cytoplasm into the nucleus which promotes the release of pro-inflammatory cytokines. The protein is Interferon-induced 35 kDa protein homolog of Mus musculus (Mouse).